A 140-amino-acid polypeptide reads, in one-letter code: uncharacterized protein (140 aa).

The next 2 helical transmembrane spans lie at 4–21 (ILKI…YLFG) and 26–48 (LVKV…SGYL).

The protein belongs to the bacteriophage holin family. Cp-1 holin subfamily.

Its subcellular location is the cell membrane. This is an uncharacterized protein from Listeria innocua serovar 6a (strain ATCC BAA-680 / CLIP 11262).